Here is a 20-residue protein sequence, read N- to C-terminus: C-reactive protein (20 aa).

One can recognise a Pentraxin (PTX) domain in the interval 1–20 (SPVAASYRATAGLAGKALDF).

This sequence belongs to the pentraxin family. As to quaternary structure, homodimer; disulfide-linked. It is not known if it assembles into a pentraxin (or pentaxin) structure. Pentraxins have a discoid arrangement of 5 non-covalently bound subunits. Glycosylated.

It localises to the secreted. In terms of biological role, displays several functions associated with host defense: it promotes agglutination, bacterial capsular swelling, phagocytosis, and complement fixation through its calcium-dependent binding to phosphorylcholine. In Mustelus canis (Smooth dogfish), this protein is C-reactive protein.